The primary structure comprises 138 residues: Acidic phospholipase A2 1 (138 aa).

Residues 1–16 (MRTLWIMAVLLVGVEG) form the signal peptide. 7 disulfides stabilise this stretch: C42-C131, C44-C60, C59-C111, C65-C138, C66-C104, C73-C97, and C91-C102. Ca(2+) contacts are provided by F43, G45, and G47. Residue H63 is part of the active site. D64 lines the Ca(2+) pocket. The active site involves D105.

It belongs to the phospholipase A2 family. Group II subfamily. D49 sub-subfamily. Ca(2+) serves as cofactor. Expressed by the venom gland.

The protein resides in the secreted. It catalyses the reaction a 1,2-diacyl-sn-glycero-3-phosphocholine + H2O = a 1-acyl-sn-glycero-3-phosphocholine + a fatty acid + H(+). Snake venom phospholipase A2 (PLA2) that has high lipolytic activity. PLA2 catalyzes the calcium-dependent hydrolysis of the 2-acyl groups in 3-sn-phosphoglycerides. In Craspedocephalus gramineus (Bamboo pit viper), this protein is Acidic phospholipase A2 1.